The chain runs to 369 residues: Outer membrane protein P2 (369 aa).

A signal peptide spans 1-20 (MKKTLAALIVGAFAASAANA).

The protein belongs to the Gram-negative porin family. In terms of assembly, homotrimer.

The protein resides in the cell outer membrane. Its function is as follows. Forms pores that allow passive diffusion of small molecules across the outer membrane. This Haemophilus influenzae protein is Outer membrane protein P2 (ompP2).